We begin with the raw amino-acid sequence, 226 residues long: Leucyl/phenylalanyl-tRNA--protein transferase (226 aa).

This sequence belongs to the L/F-transferase family.

The protein resides in the cytoplasm. The catalysed reaction is N-terminal L-lysyl-[protein] + L-leucyl-tRNA(Leu) = N-terminal L-leucyl-L-lysyl-[protein] + tRNA(Leu) + H(+). It catalyses the reaction N-terminal L-arginyl-[protein] + L-leucyl-tRNA(Leu) = N-terminal L-leucyl-L-arginyl-[protein] + tRNA(Leu) + H(+). The enzyme catalyses L-phenylalanyl-tRNA(Phe) + an N-terminal L-alpha-aminoacyl-[protein] = an N-terminal L-phenylalanyl-L-alpha-aminoacyl-[protein] + tRNA(Phe). In terms of biological role, functions in the N-end rule pathway of protein degradation where it conjugates Leu, Phe and, less efficiently, Met from aminoacyl-tRNAs to the N-termini of proteins containing an N-terminal arginine or lysine. The chain is Leucyl/phenylalanyl-tRNA--protein transferase from Pseudomonas entomophila (strain L48).